Consider the following 121-residue polypeptide: Insulin-like peptide 01 (121 aa).

Residues 1-24 (MDSFTRASLITFLILLTLTSLVFS) form the signal peptide. A propeptide spanning residues 25–45 (NGCMMRGGCFKTSEDAHRLIM) is cleaved from the precursor. 3 cysteine pairs are disulfide-bonded: Cys-52–Cys-107, Cys-64–Cys-120, and Cys-106–Cys-111. A propeptide spans 69–97 (RRRKRDLRRKLGIVMDRKESHKFLRRRKR) (c peptide).

Belongs to the insulin family.

Its subcellular location is the secreted. Insulin decreases blood glucose concentration. May have evolved to activate insulin receptors (INSR) in vertebrates. Molecular docking studies reveals unique interaction with the human insulin receptor. In vivo, insulin-like peptide injection reduces blood glucose levels in two models of zebrafish diabetes (streptozotocin- and glucose-induced). Also shorter swimming distance of zebrafish larvae, an effect which is not observed with human insulin. This chain is Insulin-like peptide 01, found in Exaiptasia diaphana (Tropical sea anemone).